A 367-amino-acid chain; its full sequence is MSDILKVDAPELFLAVTQESKFPGHITVHRLKTFSKSCVLRADFEPNPFGMVFVQGAVVGSVPLSNHRKLSVEGCPNVIESSDLLKLFEKLRMHREIVNMHGQVMIGLKQALVDASGVVKAEYIRCSDVFLWSDFGGCLPLRLWSRYVFCTERFVDDPQLILDGREGEEINILRKEALELQKQVTEQKAVVAELRLQISKQQGASAGTTSSVETSLRQTVEYWKGETQKFKNAWEMIEKERLKLSAEKNRAEYEVNSLTSARNSLQFHLDQLKQQHADTVAQAKRDRESAEKTIDDLNDKLYHYSDRLPVFRNRVRDIRNKLTDQLYLYNRVDLQARNRGQALNREVRALIDAIERDYPYIVWGVMP.

Coiled coils occupy residues 165–202 (REGE…SKQQ) and 235–308 (EMIE…SDRL).

Might be involved in virion assembly and vector-mediated transmission of the virus. The polypeptide is Protein P39 (Peanut clump virus (isolate 87/TGTA2) (PCV)).